The sequence spans 305 residues: MSQNSDTFDSGLQMEVHKMAEADNSSVQQKFDAIRDYIGRKETTIILCEHDDSRKIKLTLNKQRMESSMFLTEMPDGGIQEKTKFHRNGLAVCSYNAFDEVDLPLADSYIFYGLPSNVEAFPRMLHGIEKSAHKENKIVFIDIVVSILEKIQIKVVSFELYNRKCTVPTWVAELVITYCAPIEEQQQRIEEIRRTRASVPVAISDAANGSAEMVPSNTTGSSGSPMSTAPVPAAKKEKVQYESIRQIRPNAQGRYFVPARMINMDIEMSNDEYSPDESENDENEYDYENAARYDDGYDEGHEYCQ.

Disordered regions lie at residues 211-233 and 267-305; these read AEMVPSNTTGSSGSPMSTAPVPA and EMSNDEYSPDESENDENEYDYENAARYDDGYDEGHEYCQ. A compositionally biased stretch (polar residues) spans 215–227; the sequence is PSNTTGSSGSPMS. Positions 268 to 287 are enriched in acidic residues; the sequence is MSNDEYSPDESENDENEYDY. The segment covering 289–305 has biased composition (basic and acidic residues); it reads NAARYDDGYDEGHEYCQ.

In terms of tissue distribution, expressed throughout the male and female germline.

The protein localises to the nucleus. Its function is as follows. Plays a role in germline RNA interference (RNAi), and in particular is required for piwi-interacting RNA (piRNA) gene silencing. Facilitates the binding of the argonaut protein hrde-1 to small interfering RNAs (siRNAs) targets that are required for transgenerational epigenetic inheritance and germline immortality. This is Protein hrde-2 from Caenorhabditis elegans.